A 449-amino-acid polypeptide reads, in one-letter code: Glucose-6-phosphate isomerase (449 aa).

The active-site Proton donor is Glu291. Residues His312 and Lys426 contribute to the active site.

The protein belongs to the GPI family.

The protein localises to the cytoplasm. The enzyme catalyses alpha-D-glucose 6-phosphate = beta-D-fructose 6-phosphate. It functions in the pathway carbohydrate biosynthesis; gluconeogenesis. Its pathway is carbohydrate degradation; glycolysis; D-glyceraldehyde 3-phosphate and glycerone phosphate from D-glucose: step 2/4. In terms of biological role, catalyzes the reversible isomerization of glucose-6-phosphate to fructose-6-phosphate. The protein is Glucose-6-phosphate isomerase of Streptococcus gordonii (strain Challis / ATCC 35105 / BCRC 15272 / CH1 / DL1 / V288).